Consider the following 1204-residue polypeptide: ATP-dependent helicase/nuclease subunit A (1204 aa).

The UvrD-like helicase ATP-binding domain maps to 2–469 (TNFTKEQDQA…IILADNFRST (468 aa)). 23–30 (ASAGSGKT) provides a ligand contact to ATP. The region spanning 497–784 (GQLQFGASYY…KLMTIHASKG (288 aa)) is the UvrD-like helicase C-terminal domain.

Belongs to the helicase family. AddA subfamily. As to quaternary structure, heterodimer of AddA and AddB/RexB. Mg(2+) is required as a cofactor.

The enzyme catalyses Couples ATP hydrolysis with the unwinding of duplex DNA by translocating in the 3'-5' direction.. It carries out the reaction ATP + H2O = ADP + phosphate + H(+). Its function is as follows. The heterodimer acts as both an ATP-dependent DNA helicase and an ATP-dependent, dual-direction single-stranded exonuclease. Recognizes the chi site generating a DNA molecule suitable for the initiation of homologous recombination. The AddA nuclease domain is required for chi fragment generation; this subunit has the helicase and 3' -&gt; 5' nuclease activities. The polypeptide is ATP-dependent helicase/nuclease subunit A (Lactobacillus gasseri (strain ATCC 33323 / DSM 20243 / BCRC 14619 / CIP 102991 / JCM 1131 / KCTC 3163 / NCIMB 11718 / NCTC 13722 / AM63)).